The primary structure comprises 284 residues: ADP-polyphosphate phosphotransferase 3 (284 aa).

Composition is skewed to basic and acidic residues over residues 1–22 (MDKH…RKSA) and 260–277 (DLGK…DTRR). Disordered regions lie at residues 1–32 (MDKH…TRSG) and 260–284 (DLGK…PNLF).

The protein belongs to the polyphosphate kinase 2 (PPK2) family. Class I subfamily.

It catalyses the reaction [phosphate](n) + ATP = [phosphate](n+1) + ADP. It carries out the reaction [phosphate](n) + GTP = [phosphate](n+1) + GDP. In terms of biological role, uses inorganic polyphosphate (polyP) as a donor to convert ADP to ATP. Can also convert GDP to GTP, with lower efficiency. This Rhizobium meliloti (strain 1021) (Ensifer meliloti) protein is ADP-polyphosphate phosphotransferase 3.